Here is a 216-residue protein sequence, read N- to C-terminus: Sperm microtubule inner protein 8 (216 aa).

In terms of assembly, microtubule inner protein component of sperm flagellar doublet microtubules. As to expression, expressed in testis.

Its subcellular location is the cytoplasm. The protein localises to the cytoskeleton. It is found in the flagellum axoneme. Its function is as follows. Microtubule inner protein (MIP) part of the dynein-decorated doublet microtubules (DMTs) in flagellum axoneme. May serve to reinforce and thus stabilize the microtubule structure in the sperm flagella. The protein is Sperm microtubule inner protein 8 (Spmip8) of Mus musculus (Mouse).